We begin with the raw amino-acid sequence, 425 residues long: Phosphoribosylamine--glycine ligase (425 aa).

Positions 110 to 317 (KEFMKRHGIP…LFDALLASVE (208 aa)) constitute an ATP-grasp domain. 137-198 (ETCPTFPQVI…EAFLSGQEAS (62 aa)) is an ATP binding site. Positions 287 and 289 each coordinate Mg(2+).

It belongs to the GARS family. It depends on Mg(2+) as a cofactor. The cofactor is Mn(2+).

It catalyses the reaction 5-phospho-beta-D-ribosylamine + glycine + ATP = N(1)-(5-phospho-beta-D-ribosyl)glycinamide + ADP + phosphate + H(+). Its pathway is purine metabolism; IMP biosynthesis via de novo pathway; N(1)-(5-phospho-D-ribosyl)glycinamide from 5-phospho-alpha-D-ribose 1-diphosphate: step 2/2. This is Phosphoribosylamine--glycine ligase from Chlorobaculum tepidum (strain ATCC 49652 / DSM 12025 / NBRC 103806 / TLS) (Chlorobium tepidum).